Here is a 311-residue protein sequence, read N- to C-terminus: 2-methoxy-6-polyprenyl-1,4-benzoquinol methylase, mitochondrial (311 aa).

Residues 1–29 (MAAGLCPGRALLSRRGGALWALLGTARGR) constitute a mitochondrion transit peptide. S-adenosyl-L-methionine contacts are provided by residues threonine 100, aspartate 155, and 183-184 (NA).

It belongs to the class I-like SAM-binding methyltransferase superfamily. MenG/UbiE family. As to quaternary structure, component of a multi-subunit COQ enzyme complex, composed of at least COQ3, COQ4, COQ5, COQ6, COQ7 and COQ9.

Its subcellular location is the mitochondrion inner membrane. It carries out the reaction a 2-methoxy-6-(all-trans-polyprenyl)benzene-1,4-diol + S-adenosyl-L-methionine = a 5-methoxy-2-methyl-3-(all-trans-polyprenyl)benzene-1,4-diol + S-adenosyl-L-homocysteine + H(+). It participates in cofactor biosynthesis; ubiquinone biosynthesis. Functionally, methyltransferase required for the conversion of 2-polyprenyl-6-methoxy-1,4-benzoquinol (DDMQH2) to 2-polyprenyl-3-methyl-6-methoxy-1,4-benzoquinol (DMQH2). The polypeptide is 2-methoxy-6-polyprenyl-1,4-benzoquinol methylase, mitochondrial (Gallus gallus (Chicken)).